We begin with the raw amino-acid sequence, 543 residues long: MFS-type transporter pyvG (543 aa).

The segment at 24 to 71 is disordered; that stretch reads PPTEQQPGFQLPPPYRLAATRTQPQQQQEQEQEQEQAKPATRPPWNEP. Asparagine 94 carries N-linked (GlcNAc...) asparagine glycosylation. Helical transmembrane passes span 101–121, 141–161, 178–198, 203–223, 230–250, 259–279, 335–355, 374–394, 415–435, 440–460, 476–496, and 512–532; these read LLVY…VAIF, LGMS…SPLS, IFLL…FLIL, GFFG…VTGL, LYVW…IAGF, WSMW…LFLP, PAIL…YSYF, GLIF…YFAF, LVPA…FAWT, LHWV…SLVI, ASLF…AIMW, and LLAG…WWGP.

This sequence belongs to the major facilitator superfamily. CAR1 family.

The protein localises to the cell membrane. In terms of biological role, MFS-type transporter; part of the gene cluster that mediates the biosynthesis of pyranoviolin A, a pyranonigrin analog with a C-3 methoxy group. May be involved in the secretion of pyranoviolin A. The polypeptide is MFS-type transporter pyvG (Aspergillus violaceofuscus (strain CBS 115571)).